The primary structure comprises 95 residues: FXYD domain-containing ion transport regulator 6 (95 aa).

The signal sequence occupies residues methionine 1–alanine 18. The Extracellular segment spans residues serine 19–glutamine 35. A helical transmembrane segment spans residues threonine 36–serine 58. Over arginine 59–asparagine 95 the chain is Cytoplasmic.

It belongs to the FXYD family. In terms of assembly, regulatory subunit of the sodium/potassium-transporting ATPase which is composed of a catalytic alpha subunit, a non-catalytic beta subunit and an additional regulatory subunit. The regulatory subunit, a member of the FXYD protein family, modulates the enzymatic activity in a tissue- and isoform-specific way by changing affinities of the Na+/K+-ATPase toward Na(+), K(+) or ATP.

It localises to the cell membrane. Associates with and regulates the activity of the sodium/potassium-transporting ATPase (NKA) which catalyzes the hydrolysis of ATP coupled with the exchange of Na(+) and K(+) ions across the plasma membrane. Reduces the apparent affinity for intracellular Na(+) with no change in the apparent affinity for extracellular K(+). In addition to modulating NKA kinetics, may also function as a regulator of NKA localization to the plasma membrane. The protein is FXYD domain-containing ion transport regulator 6 (FXYD6) of Macaca fascicularis (Crab-eating macaque).